A 236-amino-acid chain; its full sequence is Large ribosomal subunit protein uL3 (236 aa).

The protein belongs to the universal ribosomal protein uL3 family. As to quaternary structure, part of the 50S ribosomal subunit. Forms a cluster with proteins L14 and L19.

Functionally, one of the primary rRNA binding proteins, it binds directly near the 3'-end of the 23S rRNA, where it nucleates assembly of the 50S subunit. The sequence is that of Large ribosomal subunit protein uL3 from Anaeromyxobacter dehalogenans (strain 2CP-C).